A 147-amino-acid chain; its full sequence is UPF0735 ACT domain-containing protein Cthe_1377 (147 aa).

In terms of domain architecture, ACT spans 71-146 (TLFFTVEDYA…GVKRQEILAR (76 aa)).

The protein belongs to the UPF0735 family.

The sequence is that of UPF0735 ACT domain-containing protein Cthe_1377 from Acetivibrio thermocellus (strain ATCC 27405 / DSM 1237 / JCM 9322 / NBRC 103400 / NCIMB 10682 / NRRL B-4536 / VPI 7372) (Clostridium thermocellum).